The sequence spans 389 residues: Phospho-N-acetylmuramoyl-pentapeptide-transferase (389 aa).

The next 10 helical transmembrane spans lie at 25 to 45 (RAVM…PWVI), 73 to 93 (TMGG…WADL), 97 to 117 (FIWI…VDDY), 135 to 155 (FWQT…VSEI), 190 to 210 (VSYP…IVGS), 222 to 242 (GLVI…AYVM), 258 to 278 (GAGE…AFLW), 286 to 306 (VFMG…IAVI), 311 to 331 (IVLF…MMQV), and 366 to 386 (QVVV…LSSL).

This sequence belongs to the glycosyltransferase 4 family. MraY subfamily. It depends on Mg(2+) as a cofactor.

Its subcellular location is the cell inner membrane. It carries out the reaction UDP-N-acetyl-alpha-D-muramoyl-L-alanyl-gamma-D-glutamyl-meso-2,6-diaminopimeloyl-D-alanyl-D-alanine + di-trans,octa-cis-undecaprenyl phosphate = di-trans,octa-cis-undecaprenyl diphospho-N-acetyl-alpha-D-muramoyl-L-alanyl-D-glutamyl-meso-2,6-diaminopimeloyl-D-alanyl-D-alanine + UMP. The protein operates within cell wall biogenesis; peptidoglycan biosynthesis. In terms of biological role, catalyzes the initial step of the lipid cycle reactions in the biosynthesis of the cell wall peptidoglycan: transfers peptidoglycan precursor phospho-MurNAc-pentapeptide from UDP-MurNAc-pentapeptide onto the lipid carrier undecaprenyl phosphate, yielding undecaprenyl-pyrophosphoryl-MurNAc-pentapeptide, known as lipid I. This chain is Phospho-N-acetylmuramoyl-pentapeptide-transferase, found in Polynucleobacter asymbioticus (strain DSM 18221 / CIP 109841 / QLW-P1DMWA-1) (Polynucleobacter necessarius subsp. asymbioticus).